The following is a 150-amino-acid chain: UPF0260 protein VIBHAR_03078 (150 aa).

The protein belongs to the UPF0260 family.

The protein is UPF0260 protein VIBHAR_03078 of Vibrio campbellii (strain ATCC BAA-1116).